The following is a 612-amino-acid chain: Phragmoplastin DRP1D (612 aa).

Residue Met1 is modified to N-acetylmethionine. One can recognise a Dynamin-type G domain in the interval 32–301 (WEALPSVAVV…LESVIRSRIP (270 aa)). The interval 42 to 49 (GGQSSGKS) is G1 motif. 45–50 (SSGKSS) is a binding site for GTP. Residues 68-70 (VTR) are G2 motif. Positions 143–146 (DLPG) are G3 motif. The interval 212-215 (TKLD) is G4 motif. GTP-binding positions include 213-218 (KLDLMD) and 243-246 (NRSQ). The tract at residues 242-245 (VNRS) is G5 motif. The GED domain maps to 520–612 (FRKIASNVAA…DEIDAAVWVR (93 aa)).

Belongs to the TRAFAC class dynamin-like GTPase superfamily. Dynamin/Fzo/YdjA family. Forms homodimer and may homooligomerize and heterooligomerize to form the phragmoplastin complex. Binds to PHIP1.

The protein resides in the cytoplasm. It localises to the cytoskeleton. It catalyses the reaction GTP + H2O = GDP + phosphate + H(+). Its function is as follows. Putative microtubule-associated force-producing protein. Has a GTPase activity. In Arabidopsis thaliana (Mouse-ear cress), this protein is Phragmoplastin DRP1D.